The chain runs to 74 residues: Consomatin Gh1 (74 aa).

Positions 1 to 22 (MQTACWVMVMMMVWITAPLSEG) are cleaved as a signal peptide. Residues 23 to 57 (GKLNDVIRGLVPDDVTPQLILRSLFFHRPSDSVVR) constitute a propeptide that is removed on maturation. A disulfide bond links Cys65 and Cys70. Trp67 carries the D-tryptophan modification. 3 positions are modified to 4-hydroxyproline: Pro71, Pro72, and Pro74.

The protein belongs to the conotoxin C superfamily. Consomatin family. Expressed by the venom duct.

The protein localises to the secreted. In terms of biological role, moderately activates human somatostatin receptors (SSTR) with a preferential activation of SSTR1 and SSTR4. In vivo, does not cause behavioral changes in mice within a few minutes of intracranial injection, but causes a progressive loss of movement thereafter. Four to five hours after injection, mice recover, even with the highest dose tested. Shows antinociception and antihyperalgesia activities in two mouse models of acute pain, most probably by acting outside the central nervous system. The protein is Consomatin Gh1 of Conus grahami (Cone snail).